The sequence spans 1770 residues: MESQQLHQNPRSLHGSAYASVTSKEVPSNQDPLAVSASNLPEFDRDSTKVNSQQETTPGTSAVPENHHHVSPQPASVPPPQNGQYQQHGMMTPNKAMASNWAHYQQPSMMTCSHYQTSPAYYQPDPHYPLPQYIPPLSTSSPDPIDSQNQHSEVPQAETKVRNNVLPPHTLTSEENFSTWVKFYIRFLKNSNLGDIIPNDQGEIKRQMTYEEHAYIYNTFQAFAPFHLLPTWVKQILEINYADILTVLCKSVSKMQTNNQELKDWIALANLEYDGSTSADTFEITVSTIIQRLKENNINVSDRLACQLILKGLSGDFKYLRNQYRTKTNMKLSQLFAEIQLIYDENKIMNLNKPSQYKQHSEYKNVSRTSPNTTNTKVTTRNYQRTNSSKPRAAKAHNIATSSKFSRVNNDHINESTVSSQYLSDDNELSLGQQQKESKPTHTIDSNDELPDHLLIDSGASQTLVRSAHYLHHATPNSEINIVDAQKQDIPINAIGNLHFNFQNGTKTSIKALHTPNIAYDLLSLSELANQNITACFTRNTLERSDGTVLAPIVKHGDFYWLSKKYLIPSHISKLTINNVNKSKSVNKYPYPLIHRMLGHANFRSIQKSLKKNAVTYLKESDIEWSNASTYQCPDCLIGKSTKHRHVKGSRLKYQESYEPFQYLHTDIFGPVHHLPKSAPSYFISFTDEKTRFQWVYPLHDRREESILNVFTSILAFIKNQFNARVLVIQMDRGSEYTNKTLHKFFTNRGITACYTTTADSRAHGVAERLNRTLLNDCRTLLHCSGLPNHLWFSAVEFSTIIRNSLVSPKNDKSARQHAGLAGLDITTILPFGQPVIVNNHNPDSKIHPRGIPGYALHPSRNSYGYIIYLPSLKKTVDTTNYVILQDKQSKLDQFNYDTLTFDDDLNRLTAHNQSFIEQNETEQSYDQNTESDHDYQSEIEINSDPLVNDFSSQSINPLQLDKEPVQKVRAPKEVDADISEYNILPSPVRSRTPHIINKESTEMGGTVESDTTSPRHSSTFTARNQKRPGSPNDMIDLTSQDRVNYGLENIKTTRLGGTEEPYIQRNSDTNIKYRTTNSTPSIDDRSSNSESTTPIISIETKAVCDNTPSIDTDPPEYRSSDHATPNIMPDKSSKNVTADSILDDLPLPDLTHQSPTDTSDVSKDIPHIHSRQTNSSLGGMDDSNVLTTTKSKKRSLEDNETEIEVSRDTWNNKNMRSLEPPRSKKRINLIAAIKGVKSIKPVRTTLRYDEAITYNKDNKEKDRYVEAYHKEISQLLKMNTWDTNKYYDRNDIDPKKVINSMFIFNKKRDGTHKARFVARGDIQHPDTYDSDMQSNTVHHYALMTSLSIALDNDYYITQLDISSAYLYADIKEELYIRPPPHLGLNDKLLRLRKSLYGLKQSGANWYETIKSYLINCCDMQEVRGWSCVFKNSQVTICLFVDDMILFSKDLNANKKIITTLKKQYDTKIINLGESDNEIQYDILGLEIKYQRSKYMKLGMEKSLTEKLPKLNVPLNPKGKKLRAPGQPGHYIDQDELEIDEDEYKEKVHEMQKLIGLASYVGYKFRFDLLYYINTLAQHILFPSRQVLDMTYELIQFMWDTRDKQLIWHKNKPTKPDNKLVAISDASYGNQPYYKSQIGNIFLLNGKVIGGKSTKASLTCTSTTEAEIHAVSEAIPLLNNLSHLVQELNKKPIIKGLLTDSRSTISIIKSTNEEKFRNRFFGTKAMRLRDEVSGNNLYVYYIETKKNIADVMTKPLPIKTFKLLTNKWIH.

3 stretches are compositionally biased toward polar residues: residues 1–11 (MESQQLHQNPR), 19–39 (ASVTSKEVPSNQDPLAVSASN), and 49–60 (KVNSQQETTPGT). Disordered regions lie at residues 1–88 (MESQ…YQQH) and 355–453 (SQYK…LPDH). Positions 295–397 (ENNINVSDRL…SSKPRAAKAH (103 aa)) are RNA-binding. The segment covering 369-382 (TSPNTTNTKVTTRN) has biased composition (low complexity). 2 stretches are compositionally biased toward polar residues: residues 399–408 (IATSSKFSRV) and 415–435 (ESTVSSQYLSDDNELSLGQQQ). D457 functions as the For protease activity; shared with dimeric partner in the catalytic mechanism. Residues 579–636 (NVNKSKSVNKYPYPLIHRMLGHANFRSIQKSLKKNAVTYLKESDIEWSNASTYQCPDC) are integrase-type zinc finger-like. An Integrase catalytic domain is found at 656–831 (ESYEPFQYLH…AGLDITTILP (176 aa)). 2 residues coordinate Mg(2+): D667 and D732. 2 disordered regions span residues 1003–1038 (EMGGTVESDTTSPRHSSTFTARNQKRPGSPNDMIDL) and 1057–1205 (GGTE…TEIE). Composition is skewed to polar residues over residues 1009 to 1024 (ESDTTSPRHSSTFTAR) and 1065 to 1082 (QRNSDTNIKYRTTNSTPS). The Bipartite nuclear localization signal signature appears at 1193 to 1227 (KKRSLEDNETEIEVSRDTWNNKNMRSLEPPRSKKR). The region spanning 1353–1491 (NDYYITQLDI…DILGLEIKYQ (139 aa)) is the Reverse transcriptase Ty1/copia-type domain. Residues D1361, D1442, D1443, D1625, E1667, and D1700 each coordinate Mg(2+). The RNase H Ty1/copia-type domain maps to 1625–1767 (DASYGNQPYY…IKTFKLLTNK (143 aa)).

As to quaternary structure, the capsid protein forms a homotrimer, from which the VLPs are assembled. The protease is a homodimer, whose active site consists of two apposed aspartic acid residues. Initially, virus-like particles (VLPs) are composed of the structural unprocessed proteins Gag and Gag-Pol, and also contain the host initiator methionine tRNA (tRNA(i)-Met) which serves as a primer for minus-strand DNA synthesis, and a dimer of genomic Ty RNA. Processing of the polyproteins occurs within the particle and proceeds by an ordered pathway, called maturation. First, the protease (PR) is released by autocatalytic cleavage of the Gag-Pol polyprotein, and this cleavage is a prerequisite for subsequent processing at the remaining sites to release the mature structural and catalytic proteins. Maturation takes place prior to the RT reaction and is required to produce transposition-competent VLPs.

It localises to the cytoplasm. Its subcellular location is the nucleus. It catalyses the reaction DNA(n) + a 2'-deoxyribonucleoside 5'-triphosphate = DNA(n+1) + diphosphate. The enzyme catalyses Endonucleolytic cleavage to 5'-phosphomonoester.. Its function is as follows. Capsid protein (CA) is the structural component of the virus-like particle (VLP), forming the shell that encapsulates the retrotransposons dimeric RNA genome. The particles are assembled from trimer-clustered units and there are holes in the capsid shells that allow for the diffusion of macromolecules. CA also has nucleocapsid-like chaperone activity, promoting primer tRNA(i)-Met annealing to the multipartite primer-binding site (PBS), dimerization of Ty2 RNA and initiation of reverse transcription. The aspartyl protease (PR) mediates the proteolytic cleavages of the Gag and Gag-Pol polyproteins after assembly of the VLP. Functionally, reverse transcriptase/ribonuclease H (RT) is a multifunctional enzyme that catalyzes the conversion of the retro-elements RNA genome into dsDNA within the VLP. The enzyme displays a DNA polymerase activity that can copy either DNA or RNA templates, and a ribonuclease H (RNase H) activity that cleaves the RNA strand of RNA-DNA heteroduplexes during plus-strand synthesis and hydrolyzes RNA primers. The conversion leads to a linear dsDNA copy of the retrotransposon that includes long terminal repeats (LTRs) at both ends. In terms of biological role, integrase (IN) targets the VLP to the nucleus, where a subparticle preintegration complex (PIC) containing at least integrase and the newly synthesized dsDNA copy of the retrotransposon must transit the nuclear membrane. Once in the nucleus, integrase performs the integration of the dsDNA into the host genome. This chain is Transposon Ty2-C Gag-Pol polyprotein (TY2B-C), found in Saccharomyces cerevisiae (strain ATCC 204508 / S288c) (Baker's yeast).